Here is a 495-residue protein sequence, read N- to C-terminus: Acyltransferase abl6 (495 aa).

The active-site Proton acceptor is His171.

It belongs to the plant acyltransferase family.

In terms of biological role, acyltransferase; part of the gene cluster that mediates the biosynthesis of abscisic acid (ABA), a phytohormone that acts antagonistically toward salicylic acid (SA), jasmonic acid (JA) and ethylene (ETH) signaling, to impede plant defense responses. The first step of the pathway catalyzes the reaction from farnesyl diphosphate to alpha-ionylideneethane performed by the alpha-ionylideneethane synthase abl3 via a three-step reaction mechanism involving 2 neutral intermediates, beta-farnesene and allofarnesene. The cytochrome P450 monooxygenase abl1 might then be involved in the conversion of alpha-ionylideneethane to alpha-ionylideneacetic acid. Alpha-ionylideneacetic acid is further converted to abscisic acid in 2 steps involving the cytochrome P450 monooxygenase abl2 and the short-chain dehydrogenase/reductase abl4, via the intermediates 1'-deoxy-ABA or 1',4'-trans-diol-ABA, depending on the order of action of these 2 enzymes. Abl2 is responsible for the hydroxylation of carbon atom C-1' and abl4 might be involved in the oxidation of the C-4' carbon atom. The acyltransferase abl6 seems not essential for the biosynthesis of ABA, but it may acetylate ABA as part of the synthesis of another ABA-related molecule. This is Acyltransferase abl6 from Leptosphaeria maculans (strain JN3 / isolate v23.1.3 / race Av1-4-5-6-7-8) (Blackleg fungus).